The sequence spans 309 residues: Homoserine kinase (309 aa).

85 to 95 (PYGLGLGSSGS) is an ATP binding site.

This sequence belongs to the GHMP kinase family. Homoserine kinase subfamily.

The protein localises to the cytoplasm. The enzyme catalyses L-homoserine + ATP = O-phospho-L-homoserine + ADP + H(+). It functions in the pathway amino-acid biosynthesis; L-threonine biosynthesis; L-threonine from L-aspartate: step 4/5. Catalyzes the ATP-dependent phosphorylation of L-homoserine to L-homoserine phosphate. This chain is Homoserine kinase, found in Thermoplasma volcanium (strain ATCC 51530 / DSM 4299 / JCM 9571 / NBRC 15438 / GSS1).